The chain runs to 647 residues: tRNA 5-methylaminomethyl-2-thiouridine biosynthesis bifunctional protein MnmC (647 aa).

A tRNA (mnm(5)s(2)U34)-methyltransferase region spans residues 1-227 (MLTWKNNLTP…KREMLIGSYS (227 aa)). Positions 256-647 (VGAGIAGTTL…ARFLYRKVRK (392 aa)) are FAD-dependent cmnm(5)s(2)U34 oxidoreductase.

The protein in the N-terminal section; belongs to the methyltransferase superfamily. tRNA (mnm(5)s(2)U34)-methyltransferase family. In the C-terminal section; belongs to the DAO family. The cofactor is FAD.

It localises to the cytoplasm. It catalyses the reaction 5-aminomethyl-2-thiouridine(34) in tRNA + S-adenosyl-L-methionine = 5-methylaminomethyl-2-thiouridine(34) in tRNA + S-adenosyl-L-homocysteine + H(+). In terms of biological role, catalyzes the last two steps in the biosynthesis of 5-methylaminomethyl-2-thiouridine (mnm(5)s(2)U) at the wobble position (U34) in tRNA. Catalyzes the FAD-dependent demodification of cmnm(5)s(2)U34 to nm(5)s(2)U34, followed by the transfer of a methyl group from S-adenosyl-L-methionine to nm(5)s(2)U34, to form mnm(5)s(2)U34. The sequence is that of tRNA 5-methylaminomethyl-2-thiouridine biosynthesis bifunctional protein MnmC from Leptospira interrogans serogroup Icterohaemorrhagiae serovar Lai (strain 56601).